The primary structure comprises 413 residues: Serine hydroxymethyltransferase (413 aa).

(6S)-5,6,7,8-tetrahydrofolate is bound by residues Leu-117 and 121-123 (GHL). Position 226 is an N6-(pyridoxal phosphate)lysine (Lys-226). (6S)-5,6,7,8-tetrahydrofolate is bound by residues Glu-239 and 349–351 (SPF).

It belongs to the SHMT family. As to quaternary structure, homodimer. Requires pyridoxal 5'-phosphate as cofactor.

It is found in the cytoplasm. The enzyme catalyses (6R)-5,10-methylene-5,6,7,8-tetrahydrofolate + glycine + H2O = (6S)-5,6,7,8-tetrahydrofolate + L-serine. The protein operates within one-carbon metabolism; tetrahydrofolate interconversion. It participates in amino-acid biosynthesis; glycine biosynthesis; glycine from L-serine: step 1/1. Functionally, catalyzes the reversible interconversion of serine and glycine with tetrahydrofolate (THF) serving as the one-carbon carrier. This reaction serves as the major source of one-carbon groups required for the biosynthesis of purines, thymidylate, methionine, and other important biomolecules. Also exhibits THF-independent aldolase activity toward beta-hydroxyamino acids, producing glycine and aldehydes, via a retro-aldol mechanism. The protein is Serine hydroxymethyltransferase of Bacillus cereus (strain G9842).